Consider the following 339-residue polypeptide: Phenylalanine--tRNA ligase alpha subunit (339 aa).

Glu-250 lines the Mg(2+) pocket.

It belongs to the class-II aminoacyl-tRNA synthetase family. Phe-tRNA synthetase alpha subunit type 1 subfamily. As to quaternary structure, tetramer of two alpha and two beta subunits. It depends on Mg(2+) as a cofactor.

Its subcellular location is the cytoplasm. It carries out the reaction tRNA(Phe) + L-phenylalanine + ATP = L-phenylalanyl-tRNA(Phe) + AMP + diphosphate + H(+). The polypeptide is Phenylalanine--tRNA ligase alpha subunit (Christiangramia forsetii (strain DSM 17595 / CGMCC 1.15422 / KT0803) (Gramella forsetii)).